Here is a 127-residue protein sequence, read N- to C-terminus: Protein YwpG (127 aa).

In terms of assembly, interacts with both the D1 and D2 domains of dynamin-like protein DynA.

It is found in the cell membrane. The polypeptide is Protein YwpG (ywpG) (Bacillus subtilis (strain 168)).